Here is a 510-residue protein sequence, read N- to C-terminus: 2,3-bisphosphoglycerate-independent phosphoglycerate mutase (510 aa).

The Mn(2+) site is built by D13 and S63. S63 acts as the Phosphoserine intermediate in catalysis. Substrate-binding positions include H124, 154-155 (RD), R186, R192, 262-265 (RADR), and K334. 5 residues coordinate Mn(2+): D401, H405, D442, H443, and H461.

It belongs to the BPG-independent phosphoglycerate mutase family. Monomer. The cofactor is Mn(2+).

It catalyses the reaction (2R)-2-phosphoglycerate = (2R)-3-phosphoglycerate. Its pathway is carbohydrate degradation; glycolysis; pyruvate from D-glyceraldehyde 3-phosphate: step 3/5. Functionally, catalyzes the interconversion of 2-phosphoglycerate and 3-phosphoglycerate. The protein is 2,3-bisphosphoglycerate-independent phosphoglycerate mutase of Vibrio campbellii (strain ATCC BAA-1116).